We begin with the raw amino-acid sequence, 530 residues long: Chaperone Ric-8A (530 aa).

Serine 435 carries the phosphoserine modification. Phosphothreonine occurs at positions 440 and 442. Phosphoserine occurs at positions 501, 522, 523, and 527.

Belongs to the synembryn family. Interacts with GDP-bound G alpha proteins GNAI1, GNAO1 and GNAQ, and with GNA13 with lower affinity. Does not interact with G-alpha proteins when they are in complex with subunits beta and gamma. Interacts (via C-terminus) with RGS14; the interaction stimulates the dissociation of the complex between RGS14 and the active GTP-bound form of GNAI1. Interacts with NCS1; interaction is favored in the absence of Ca(2+) and myristoylation of NCS1 is not required. Phosphorylated at Ser-435 and Thr-440 by CK2, stabilizing its interface with G alpha proteins.

It is found in the cytoplasm. It localises to the cell cortex. Its function is as follows. Chaperone that specifically binds and folds nascent G alpha proteins prior to G protein heterotrimer formation, promoting their stability and activity: folds GNAI1, GNAO1, GNA13 and GNAQ. Does not fold G(s) G-alpha proteins GNAS nor GNAL. Also acts as a guanine nucleotide exchange factor (GEF) for G alpha proteins by stimulating exchange of bound GDP for free GTP. Involved in regulation of microtubule pulling forces during mitotic movement of chromosomes by stimulating G(i)-alpha protein (GNAI1), possibly leading to release G(i)-alpha-GTP and NuMA proteins from the NuMA-GPSM2-G(i)-alpha-GDP complex. Also acts as an activator for G(q)-alpha (GNAQ) protein by enhancing the G(q)-coupled receptor-mediated ERK activation. The sequence is that of Chaperone Ric-8A (RIC8A) from Pongo abelii (Sumatran orangutan).